The sequence spans 592 residues: Aspartate--tRNA(Asp/Asn) ligase (592 aa).

L-aspartate is bound at residue E176. The interval 200–203 is aspartate; the sequence is QIFK. R222 contributes to the L-aspartate binding site. ATP is bound by residues 222–224 and Q231; that span reads RDE. L-aspartate is bound at residue H450. E484 lines the ATP pocket. R491 contributes to the L-aspartate binding site. Position 536–539 (536–539) interacts with ATP; that stretch reads GLDR.

It belongs to the class-II aminoacyl-tRNA synthetase family. Type 1 subfamily. Homodimer.

Its subcellular location is the cytoplasm. It carries out the reaction tRNA(Asx) + L-aspartate + ATP = L-aspartyl-tRNA(Asx) + AMP + diphosphate. Functionally, aspartyl-tRNA synthetase with relaxed tRNA specificity since it is able to aspartylate not only its cognate tRNA(Asp) but also tRNA(Asn). Reaction proceeds in two steps: L-aspartate is first activated by ATP to form Asp-AMP and then transferred to the acceptor end of tRNA(Asp/Asn). The polypeptide is Aspartate--tRNA(Asp/Asn) ligase (Anoxybacillus flavithermus (strain DSM 21510 / WK1)).